A 489-amino-acid polypeptide reads, in one-letter code: Valine--tRNA ligase (489 aa).

The 'KMSKS' region signature appears at 482–486 (KMSKS). Lys485 serves as a coordination point for ATP.

The protein belongs to the class-I aminoacyl-tRNA synthetase family.

The catalysed reaction is tRNA(Val) + L-valine + ATP = L-valyl-tRNA(Val) + AMP + diphosphate. This chain is Valine--tRNA ligase (VALS), found in Trichomonas vaginalis.